The chain runs to 114 residues: MVTKEQRRQKIKARVRGKISGTQERPRLTVFRSNKQIYAQLIDDIAGRTLASASSLKLEMTGSKKEIAAKVGDEIAKAATEAGISTVVFDRNGYLFHGRIKELADAARKGGLKF.

The protein belongs to the universal ribosomal protein uL18 family. Part of the 50S ribosomal subunit; part of the 5S rRNA/L5/L18/L25 subcomplex. Contacts the 5S and 23S rRNAs.

This is one of the proteins that bind and probably mediate the attachment of the 5S RNA into the large ribosomal subunit, where it forms part of the central protuberance. In Porphyromonas gingivalis (strain ATCC 33277 / DSM 20709 / CIP 103683 / JCM 12257 / NCTC 11834 / 2561), this protein is Large ribosomal subunit protein uL18.